The sequence spans 713 residues: Phospholipase A1 PLIP2, chloroplastic (713 aa).

Residues 1-32 (MDSLCLNSGLHGVIPAITAVGNGGCGGVVEVR) constitute a chloroplast transit peptide. Disordered stretches follow at residues 118 to 140 (WKHEEEEDDDEVEDEDGDEDEEV) and 232 to 261 (ALKAENGEVSGETKPIVEAEEEVEEEEKNK). The span at 122–140 (EEEDDDEVEDEDGDEDEEV) shows a compositional bias: acidic residues. The GXSXG motif lies at 426-430 (GHSLG). Ser428 acts as the Acyl-ester intermediate in catalysis. Residues Asp489 and His608 each act as charge relay system in the active site.

It belongs to the AB hydrolase superfamily. Lipase family.

It is found in the plastid. Its subcellular location is the chloroplast membrane. The protein resides in the chloroplast stroma. It carries out the reaction a 1,2-diacyl-3-O-(beta-D-galactosyl)-sn-glycerol + 2 H2O = 3-beta-D-galactosyl-sn-glycerol + 2 a fatty acid + 2 H(+). It catalyses the reaction a 1,2-diacyl-sn-glycero-3-phosphocholine + H2O = a 2-acyl-sn-glycero-3-phosphocholine + a fatty acid + H(+). The enzyme catalyses 1-hexadecanoyl-2-(9Z-octadecenoyl)-sn-glycero-3-phosphocholine + H2O = 2-(9Z-octadecenoyl)-sn-glycero-3-phosphocholine + hexadecanoate + H(+). The catalysed reaction is 1,2-di-(9Z-octadecenoyl)-sn-glycero-3-phosphocholine + H2O = 2-(9Z-octadecenoyl)-sn-glycero-3-phosphocholine + (9Z)-octadecenoate + H(+). It carries out the reaction 1-octadecanoyl-2-(9Z-octadecenoyl)-sn-glycero-3-phosphocholine + H2O = 2-(9Z-octadecenoyl)-sn-glycero-3-phosphocholine + octadecanoate + H(+). It catalyses the reaction 1-octadecanoyl-2-(9Z,12Z)-octadecadienoyl-sn-glycero-3-phosphocholine + H2O = 2-(9Z,12Z-octadecadienoyl)-sn-glycero-3-phosphocholine + octadecanoate + H(+). The enzyme catalyses 1,2-di-(9Z,12Z-octadecadienoyl)-sn-glycero-3-phosphocholine + H2O = 2-(9Z,12Z-octadecadienoyl)-sn-glycero-3-phosphocholine + (9Z,12Z)-octadecadienoate + H(+). The catalysed reaction is 1-(9Z-octadecenoyl)-2-hexadecanoyl-sn-glycero-3-phosphocholine + H2O = 2-hexadecanoyl-sn-glycero-3-phosphocholine + (9Z)-octadecenoate + H(+). Sn-1-specific phospholipase A1 that catalyzes the initial step of oxylipins and jasmonate (JA) biosynthesis. Hydrolyzes polyunsaturated acyl groups preferentially from chloroplastic monogalactosyldiacylglycerol (MGDG). May function downstream of abscisic acid (ABA) and provide a link between ABA-mediated abiotic stress responses and oxylipin and JA signalings. In vitro, possesses broad substrate specificity. Can hydrolyze the galactolipids monogalactosyldiacylglycerol (MGDG) and digalactosyldiacylglycerol (DGDG), the sulfolipid sulfoquinovosyldiacylglycerol (SQDG), and the phoshpolipids phosphatidylcholine (PC), and phosphatidylglycerol (PG). This Arabidopsis thaliana (Mouse-ear cress) protein is Phospholipase A1 PLIP2, chloroplastic.